An 81-amino-acid polypeptide reads, in one-letter code: Centromere protein X (81 aa).

Methionine 1 is subject to N-acetylmethionine.

This sequence belongs to the CENP-X/MHF2 family. As to quaternary structure, heterodimer with CENPX, sometimes called MHF; this interaction stabilizes both partners. MHF heterodimers can assemble to form tetrameric structures. MHF also coassemble with CENPT-CENPW heterodimers at centromeres to form the tetrameric CENP-T-W-S-X complex. Forms a discrete complex with FANCM and CENPX, called FANCM-MHF; this interaction, probably mediated by direct binding between CENPS and FANCM, leads to synergistic activation of double-stranded DNA binding and strongly stimulates FANCM-mediated DNA remodeling. Recruited by FANCM to the Fanconi anemia (FA) core complex, which consists of CENPS, CENPX, FANCA, FANCB, FANCC, FANCE, FANCF, FANCG, FANCL, FANCM, FAAP24 and FAAP100. The FA core complex associates with Bloom syndrome (BLM) complex, which consists of at least BLM, DNA topoisomerase 3-alpha (TOP3A), RMI1/BLAP75, RPA1/RPA70 and RPA2/RPA32. The super complex between FA and BLM is called BRAFT.

It localises to the nucleus. The protein localises to the chromosome. The protein resides in the centromere. Its subcellular location is the kinetochore. Functionally, DNA-binding component of the Fanconi anemia (FA) core complex. Required for the normal activation of the FA pathway, leading to monoubiquitination of the FANCI-FANCD2 complex in response to DNA damage, cellular resistance to DNA cross-linking drugs, and prevention of chromosomal breakage. In complex with CENPS (MHF heterodimer), crucial cofactor for FANCM in both binding and ATP-dependent remodeling of DNA. Stabilizes FANCM. In complex with CENPS and FANCM (but not other FANC proteins), rapidly recruited to blocked forks and promotes gene conversion at blocked replication forks. In complex with CENPS, CENPT and CENPW (CENP-T-W-S-X heterotetramer), involved in the formation of a functional kinetochore outer plate, which is essential for kinetochore-microtubule attachment and faithful mitotic progression. As a component of MHF and CENP-T-W-S-X complexes, binds DNA and bends it to form a nucleosome-like structure. DNA-binding function is fulfilled in the presence of CENPS, with the following preference for DNA substates: Holliday junction &gt; double-stranded &gt; splay arm &gt; single-stranded. Does not bind DNA on its own. The protein is Centromere protein X (CENPX) of Pongo abelii (Sumatran orangutan).